The sequence spans 493 residues: Alcohol-forming fatty acyl-CoA reductase (493 aa).

It belongs to the fatty acyl-CoA reductase family.

It catalyses the reaction a long-chain fatty acyl-CoA + 2 NADPH + 2 H(+) = a long-chain primary fatty alcohol + 2 NADP(+) + CoA. Its function is as follows. NADPH-dependent alcohol-forming fatty acyl-coenzyme A reductase that catalyzes the reduction of fatty acyl-CoA to fatty alcohols. The recombinant enzyme accepts saturated and mono-unsaturated fatty acyl-CoAs of 16 to 22 carbons. The polypeptide is Alcohol-forming fatty acyl-CoA reductase (Simmondsia chinensis (Jojoba)).